We begin with the raw amino-acid sequence, 402 residues long: MSRVSQARSLGKYFLLVDNMLVVLGFFVVFPLISIRFVDQMGWAALMVGIALGLRQLVQQGLGIFGGAIADRFGAKPMIVTGMLMRAGGFAAMAVAHEPWVLWFSCILSGLGGTLFDPPRAALVVKLVRPHQRGRFFSILMMQDSAGAVIGALLGSWLLQYDFRLVCSAGAALFIACAAFNAWYLPAWKLSTVKTPIREGLGRVLRDKRFVTYVLTLTGYYMLAVQVMLMLPIMVNDIAGSPAAVKWMYAIEATISLTLLYPIARWSEKRFRLEHRLMAGLLVMTLAMLPIGMTSSLQQLFTLICLFYIGSIIAEPARETLGASLADARARGSYMGFSRLGLAFGGALGYAGGGWLFDAGKAVGQPERPWLMLGAIGVITFLALWWQFSPKRSASGMLEPRT.

Transmembrane regions (helical) follow at residues 13–33 (YFLLVDNMLVVLGFFVVFPLI), 34–54 (SIRFVDQMGWAALMVGIALGL), 99–116 (PWVLWFSCILSGLGGTLF), 139–159 (ILMMQDSAGAVIGALLGSWLL), 165–185 (LVCSAGAALFIACAAFNAWYL), 214–234 (VLTLTGYYMLAVQVMLMLPIM), 243–263 (AAVKWMYAIEATISLTLLYPI), 277–297 (LMAGLLVMTLAMLPIGMTSSL), 300–320 (LFTLICLFYIGSIIAEPARET), 340–360 (LGLAFGGALGYAGGGWLFDAG), and 369–389 (PWLMLGAIGVITFLALWWQFS).

This sequence belongs to the major facilitator superfamily. DHA1 family. MdtH (TC 2.A.1.2.21) subfamily.

The protein resides in the cell inner membrane. This is Multidrug resistance protein MdtH from Klebsiella pneumoniae subsp. pneumoniae (strain ATCC 700721 / MGH 78578).